The primary structure comprises 219 residues: Small ribosomal subunit protein uS3 (219 aa).

The 69-residue stretch at I38–K106 folds into the KH type-2 domain.

The protein belongs to the universal ribosomal protein uS3 family. As to quaternary structure, part of the 30S ribosomal subunit. Forms a tight complex with proteins S10 and S14.

Binds the lower part of the 30S subunit head. Binds mRNA in the 70S ribosome, positioning it for translation. The polypeptide is Small ribosomal subunit protein uS3 (Bacillus cytotoxicus (strain DSM 22905 / CIP 110041 / 391-98 / NVH 391-98)).